We begin with the raw amino-acid sequence, 340 residues long: Phosphoribosylformylglycinamidine cyclo-ligase (340 aa).

This sequence belongs to the AIR synthase family.

It is found in the cytoplasm. The catalysed reaction is 2-formamido-N(1)-(5-O-phospho-beta-D-ribosyl)acetamidine + ATP = 5-amino-1-(5-phospho-beta-D-ribosyl)imidazole + ADP + phosphate + H(+). The protein operates within purine metabolism; IMP biosynthesis via de novo pathway; 5-amino-1-(5-phospho-D-ribosyl)imidazole from N(2)-formyl-N(1)-(5-phospho-D-ribosyl)glycinamide: step 2/2. This is Phosphoribosylformylglycinamidine cyclo-ligase from Acetivibrio thermocellus (strain ATCC 27405 / DSM 1237 / JCM 9322 / NBRC 103400 / NCIMB 10682 / NRRL B-4536 / VPI 7372) (Clostridium thermocellum).